The primary structure comprises 78 residues: U-scoloptoxin(04)-Er1e (78 aa).

Residues 1–24 form the signal peptide; the sequence is MTRHLIFAAMLLVCLFVCWNAVGA. Residues 25-28 constitute a propeptide that is removed on maturation; it reads RDAR.

The protein belongs to the scoloptoxin-04 family. Post-translationally, contains 2 disulfide bonds. Expressed by the venom gland.

It is found in the secreted. This is U-scoloptoxin(04)-Er1e from Ethmostigmus rubripes (Giant centipede).